The sequence spans 37 residues: MKVRASVKKICANCRLIRRKRKILVICVNPKHKQRQG.

The protein belongs to the bacterial ribosomal protein bL36 family.

Its subcellular location is the plastid. It is found in the chloroplast. This chain is Large ribosomal subunit protein bL36c, found in Stigeoclonium helveticum (Green alga).